The chain runs to 197 residues: CASP-like protein 1B2 (197 aa).

An N-acetylalanine modification is found at A2. Residues 2–17 (AREKIVVAGGSTKSWK) are Cytoplasmic-facing. Residues 18-38 (LLLGLRVFAFMATLAAAIVMS) form a helical membrane-spanning segment. The Extracellular portion of the chain corresponds to 39-69 (LNKETKTLVVATIGTLPIKATLTAKFQDTPA). Residues 70–90 (FVFFVIANVMVSFHNLLMIVL) traverse the membrane as a helical segment. Topologically, residues 91-106 (QIFSRKLEYKGVRLLS) are cytoplasmic. The helical transmembrane segment at 107–127 (IAILDMLNATLVSAAANAAVF) threads the bilayer. Topologically, residues 128-156 (VAELGKNGNKHAKWNKVCDRFATYCDHGA) are extracellular. Residues 157-177 (GALIAAFAGVILMLLVSSVSI) traverse the membrane as a helical segment. Residues 178-197 (SRLLINSKHLSTTATTTAVV) are Cytoplasmic-facing.

The protein belongs to the Casparian strip membrane proteins (CASP) family. Homodimer and heterodimers.

Its subcellular location is the cell membrane. The protein is CASP-like protein 1B2 of Arabidopsis lyrata subsp. lyrata (Lyre-leaved rock-cress).